The primary structure comprises 1402 residues: DNA-directed RNA polymerase subunit beta' (1402 aa).

The Zn(2+) site is built by Cys71, Cys73, Cys86, and Cys89. Residues Asp462, Asp464, and Asp466 each contribute to the Mg(2+) site. Residues Cys811, Cys885, Cys892, and Cys895 each coordinate Zn(2+).

The protein belongs to the RNA polymerase beta' chain family. As to quaternary structure, the RNAP catalytic core consists of 2 alpha, 1 beta, 1 beta' and 1 omega subunit. When a sigma factor is associated with the core the holoenzyme is formed, which can initiate transcription. The cofactor is Mg(2+). Zn(2+) is required as a cofactor.

It carries out the reaction RNA(n) + a ribonucleoside 5'-triphosphate = RNA(n+1) + diphosphate. Its function is as follows. DNA-dependent RNA polymerase catalyzes the transcription of DNA into RNA using the four ribonucleoside triphosphates as substrates. This chain is DNA-directed RNA polymerase subunit beta', found in Rhizobium johnstonii (strain DSM 114642 / LMG 32736 / 3841) (Rhizobium leguminosarum bv. viciae).